Consider the following 473-residue polypeptide: Pyruvate kinase (473 aa).

Arginine 32 contacts substrate. K(+) contacts are provided by asparagine 34, serine 36, aspartate 66, and threonine 67. Asparagine 34–histidine 37 is an ATP binding site. ATP-binding residues include arginine 73 and lysine 155. Glutamate 221 contributes to the Mg(2+) binding site. Substrate-binding residues include glycine 244, aspartate 245, and threonine 277. Aspartate 245 serves as a coordination point for Mg(2+).

Belongs to the pyruvate kinase family. As to quaternary structure, homotetramer. Requires Mg(2+) as cofactor. K(+) serves as cofactor.

It carries out the reaction pyruvate + ATP = phosphoenolpyruvate + ADP + H(+). The protein operates within carbohydrate degradation; glycolysis; pyruvate from D-glyceraldehyde 3-phosphate: step 5/5. This chain is Pyruvate kinase (pyk), found in Clostridium acetobutylicum (strain ATCC 824 / DSM 792 / JCM 1419 / IAM 19013 / LMG 5710 / NBRC 13948 / NRRL B-527 / VKM B-1787 / 2291 / W).